Consider the following 414-residue polypeptide: Esterase FrsA (414 aa).

This sequence belongs to the FrsA family.

It catalyses the reaction a carboxylic ester + H2O = an alcohol + a carboxylate + H(+). In terms of biological role, catalyzes the hydrolysis of esters. The sequence is that of Esterase FrsA from Escherichia coli (strain K12 / DH10B).